The sequence spans 761 residues: Phosphoribosylformylglycinamidine synthase subunit PurL (761 aa).

Residues 1-16 are compositionally biased toward low complexity; sequence MTGNPAAPAATSVSPP. The tract at residues 1-21 is disordered; that stretch reads MTGNPAAPAATSVSPPAEQPY. H57 is a catalytic residue. The ATP site is built by Y60 and K101. Residue E103 participates in Mg(2+) binding. Residues 104–107 and R126 each bind substrate; that span reads SHNH. The Proton acceptor role is filled by H105. A Mg(2+)-binding site is contributed by D127. A substrate-binding site is contributed by Q252. D280 contacts Mg(2+). A substrate-binding site is contributed by 329–331; the sequence is ESQ. Positions 519 and 556 each coordinate ATP. N557 serves as a coordination point for Mg(2+). Residue S559 participates in substrate binding.

Belongs to the FGAMS family. As to quaternary structure, monomer. Part of the FGAM synthase complex composed of 1 PurL, 1 PurQ and 2 PurS subunits.

The protein resides in the cytoplasm. The catalysed reaction is N(2)-formyl-N(1)-(5-phospho-beta-D-ribosyl)glycinamide + L-glutamine + ATP + H2O = 2-formamido-N(1)-(5-O-phospho-beta-D-ribosyl)acetamidine + L-glutamate + ADP + phosphate + H(+). It functions in the pathway purine metabolism; IMP biosynthesis via de novo pathway; 5-amino-1-(5-phospho-D-ribosyl)imidazole from N(2)-formyl-N(1)-(5-phospho-D-ribosyl)glycinamide: step 1/2. In terms of biological role, part of the phosphoribosylformylglycinamidine synthase complex involved in the purines biosynthetic pathway. Catalyzes the ATP-dependent conversion of formylglycinamide ribonucleotide (FGAR) and glutamine to yield formylglycinamidine ribonucleotide (FGAM) and glutamate. The FGAM synthase complex is composed of three subunits. PurQ produces an ammonia molecule by converting glutamine to glutamate. PurL transfers the ammonia molecule to FGAR to form FGAM in an ATP-dependent manner. PurS interacts with PurQ and PurL and is thought to assist in the transfer of the ammonia molecule from PurQ to PurL. The protein is Phosphoribosylformylglycinamidine synthase subunit PurL of Frankia casuarinae (strain DSM 45818 / CECT 9043 / HFP020203 / CcI3).